Here is a 312-residue protein sequence, read N- to C-terminus: Olfactory receptor 6B2 (312 aa).

Residues 1–25 are Extracellular-facing; the sequence is MSGENVTKVSTFILVGLPTAPGLQY. Asparagine 5 carries an N-linked (GlcNAc...) asparagine glycan. A helical membrane pass occupies residues 26–46; sequence LLFLLFLLTYLFVLVENLAII. Over 47–54 the chain is Cytoplasmic; it reads LIVWSSTS. A helical transmembrane segment spans residues 55–75; it reads LHRPMYYFLSSMSFLEIWYVS. At 76–99 the chain is on the extracellular side; it reads DITPKMLEGFLLQQKRISFVGCMT. Cysteine 97 and cysteine 189 are joined by a disulfide. Residues 100-120 form a helical membrane-spanning segment; the sequence is QLYFFSSLVCTECVLLASMAY. Over 121 to 139 the chain is Cytoplasmic; the sequence is DRYVAICHPLRYHVLVTPG. Residues 140–160 form a helical membrane-spanning segment; sequence LCLQLVGFSFVSGFTISMIKV. Over 161-196 the chain is Extracellular; it reads CFISSVTFCGSNVLNHFFCDISPILKLACTDFSTAE. A helical membrane pass occupies residues 197-217; the sequence is LVDFILAFIILVFPLLATILS. Residues 218–237 lie on the Cytoplasmic side of the membrane; sequence YWHITLAVLRIPSATGCWRA. The chain crosses the membrane as a helical span at residues 238-258; sequence FSTCASHLTVVTVFYTALLFM. Topologically, residues 259-271 are extracellular; sequence YVRPQAIDSQSSN. The helical transmembrane segment at 272–292 threads the bilayer; it reads KLISAVYTVVTPIINPLIYCL. The Cytoplasmic portion of the chain corresponds to 293-312; sequence RNKEFKDALKKALGLGQTSH.

It belongs to the G-protein coupled receptor 1 family.

Its subcellular location is the cell membrane. Its function is as follows. Odorant receptor. The sequence is that of Olfactory receptor 6B2 (OR6B2) from Homo sapiens (Human).